An 82-amino-acid polypeptide reads, in one-letter code: Beta-defensin 113 (82 aa).

The N-terminal stretch at 1 to 16 (MKILCIFLTFFFTVSC) is a signal peptide. Cystine bridges form between C35/C61, C42/C56, and C46/C62.

The protein belongs to the beta-defensin family.

It is found in the secreted. Functionally, has antibacterial activity. This Pan troglodytes (Chimpanzee) protein is Beta-defensin 113 (DEFB113).